Consider the following 352-residue polypeptide: tRNA-specific 2-thiouridylase MnmA (352 aa).

Residues 9–16 (ALSGGVDS) and Met-35 each bind ATP. The active-site Nucleophile is the Cys-96. Cys-96 and Cys-192 are joined by a disulfide. Gly-120 lines the ATP pocket. The interaction with tRNA stretch occupies residues 142–144 (KDQ). The Cysteine persulfide intermediate role is filled by Cys-192. The interaction with tRNA stretch occupies residues 299 to 300 (RY).

Belongs to the MnmA/TRMU family.

It is found in the cytoplasm. It catalyses the reaction S-sulfanyl-L-cysteinyl-[protein] + uridine(34) in tRNA + AH2 + ATP = 2-thiouridine(34) in tRNA + L-cysteinyl-[protein] + A + AMP + diphosphate + H(+). In terms of biological role, catalyzes the 2-thiolation of uridine at the wobble position (U34) of tRNA, leading to the formation of s(2)U34. This chain is tRNA-specific 2-thiouridylase MnmA, found in Acidithiobacillus ferrooxidans (strain ATCC 23270 / DSM 14882 / CIP 104768 / NCIMB 8455) (Ferrobacillus ferrooxidans (strain ATCC 23270)).